We begin with the raw amino-acid sequence, 520 residues long: Cyclic AMP-responsive element-binding protein 3-like protein 2 (520 aa).

Residues 1 to 379 (MEVLESGEQG…KLAGTQTGTC (379 aa)) lie on the Cytoplasmic side of the membrane. Position 93 is a phosphoserine (S93). Residue K178 forms a Glycyl lysine isopeptide (Lys-Gly) (interchain with G-Cter in SUMO2) linkage. A Phosphoserine modification is found at S191. The tract at residues 195–264 (APVDHLHLPP…PHKLQGSGPL (70 aa)) is disordered. Low complexity-rich tracts occupy residues 208-220 (SSHG…SLSP) and 234-255 (SPSR…LTAP). The 64-residue stretch at 294–357 (ALKKIRRKIK…RTLLQQLQKL (64 aa)) folds into the bZIP domain. Residues 296–325 (KKIRRKIKNKISAQESRRKKKEYMDSLEKK) form a basic motif region. Positions 336–357 (LRKKVEVLENTNRTLLQQLQKL) are leucine-zipper. Residues 380-400 (LMVVVLCFAVAFGSFFQGYGP) form a helical; Signal-anchor for type II membrane protein membrane-spanning segment. The Lumenal segment spans residues 401–520 (YPSATKMALP…ELDRRVNTTF (120 aa)). An S1P recognition motif is present at residues 427 to 430 (RNLL). 3 N-linked (GlcNAc...) asparagine glycosylation sites follow: N480, N504, and N517.

Belongs to the bZIP family. ATF subfamily. In terms of assembly, binds DNA as a dimer. Post-translationally, upon ER stress, translocated to the Golgi apparatus, where it is processed by regulated intramembrane proteolysis (RIP) to release the cytosol-facing N-terminal transcription factor domain. The cleavage is performed sequentially by site-1 and site-2 proteases (S1P/MBTPS1 and S2P/MBTPS2). In terms of processing, N-glycosylated. Ubiquitinated by HRD1/SYVN1; undergoes 'Lys-48'-linked ubiquitination, followed by rapid proteasomal degradation under normal conditions. Upon ER stress, SYVN1 E3 ubiquitin-protein ligase dissociates from its substrate, ubiquitination does not occur and CREB3L2 is stabilized. As to expression, widely expressed with highest levels in placenta, lung, spleen and intestine, and lowest levels in heart, brain, skeletal muscle, thymus, colon and leukocytes. In fetal tissues, the weakest expression is detected in brain and heart.

The protein resides in the endoplasmic reticulum membrane. It localises to the nucleus. Transcription factor involved in unfolded protein response (UPR). In the absence of endoplasmic reticulum (ER) stress, inserted into ER membranes, with N-terminal DNA-binding and transcription activation domains oriented toward the cytosolic face of the membrane. In response to ER stress, transported to the Golgi, where it is cleaved in a site-specific manner by resident proteases S1P/MBTPS1 and S2P/MBTPS2. The released N-terminal cytosolic domain is translocated to the nucleus to effect transcription of specific target genes. Plays a critical role in chondrogenesis by activating the transcription of SEC23A, which promotes the transport and secretion of cartilage matrix proteins, and possibly that of ER biogenesis-related genes. In a neuroblastoma cell line, protects cells from ER stress-induced death. In vitro activates transcription of target genes via direct binding to the CRE site. The sequence is that of Cyclic AMP-responsive element-binding protein 3-like protein 2 (CREB3L2) from Homo sapiens (Human).